We begin with the raw amino-acid sequence, 130 residues long: Small ribosomal subunit protein uS8 (130 aa).

Belongs to the universal ribosomal protein uS8 family. As to quaternary structure, part of the 30S ribosomal subunit. Contacts proteins S5 and S12.

One of the primary rRNA binding proteins, it binds directly to 16S rRNA central domain where it helps coordinate assembly of the platform of the 30S subunit. This chain is Small ribosomal subunit protein uS8, found in Opitutus terrae (strain DSM 11246 / JCM 15787 / PB90-1).